We begin with the raw amino-acid sequence, 301 residues long: N-acetylmuramic acid 6-phosphate etherase (301 aa).

In terms of domain architecture, SIS spans 59-222 (TSEALMHGGR…STSVMVKLGK (164 aa)). Glutamate 87 serves as the catalytic Proton donor. Glutamate 118 is an active-site residue.

It belongs to the GCKR-like family. MurNAc-6-P etherase subfamily. In terms of assembly, homodimer.

The enzyme catalyses N-acetyl-D-muramate 6-phosphate + H2O = N-acetyl-D-glucosamine 6-phosphate + (R)-lactate. Its pathway is amino-sugar metabolism; N-acetylmuramate degradation. In terms of biological role, specifically catalyzes the cleavage of the D-lactyl ether substituent of MurNAc 6-phosphate, producing GlcNAc 6-phosphate and D-lactate. This chain is N-acetylmuramic acid 6-phosphate etherase, found in Picosynechococcus sp. (strain ATCC 27264 / PCC 7002 / PR-6) (Agmenellum quadruplicatum).